Here is a 23-residue protein sequence, read N- to C-terminus: IIGDTINGAIANANNIVGKIGII.

As to expression, expressed in skin glands.

Its subcellular location is the secreted. Functionally, may act as an antimicrobial peptide. The chain is Septenin 2a from Osteopilus septentrionalis (Cuban treefrog).